The primary structure comprises 507 residues: ATP synthase subunit alpha, chloroplastic (507 aa).

An ATP-binding site is contributed by 170–177; sequence GDRQTGKT. The residue at position 257 (T257) is a Phosphothreonine.

It belongs to the ATPase alpha/beta chains family. As to quaternary structure, F-type ATPases have 2 components, CF(1) - the catalytic core - and CF(0) - the membrane proton channel. CF(1) has five subunits: alpha(3), beta(3), gamma(1), delta(1), epsilon(1). CF(0) has four main subunits: a, b, b' and c.

It localises to the plastid. The protein resides in the chloroplast thylakoid membrane. It carries out the reaction ATP + H2O + 4 H(+)(in) = ADP + phosphate + 5 H(+)(out). Produces ATP from ADP in the presence of a proton gradient across the membrane. The alpha chain is a regulatory subunit. The polypeptide is ATP synthase subunit alpha, chloroplastic (Capsella bursa-pastoris (Shepherd's purse)).